We begin with the raw amino-acid sequence, 266 residues long: Tropinone reductase homolog At1g07440 (266 aa).

An NADP(+)-binding site is contributed by 18–42 (LVTGGTKGIGHAIVEEFAGFGAVIH). Residue Ser151 coordinates substrate. The active-site Proton acceptor is the Tyr164.

It belongs to the short-chain dehydrogenases/reductases (SDR) family. SDR65C subfamily.

This chain is Tropinone reductase homolog At1g07440, found in Arabidopsis thaliana (Mouse-ear cress).